A 404-amino-acid polypeptide reads, in one-letter code: MRTSGSRLFTSESVTEGHPDKICDAISDSILDALLAEDPRSRVAVETLVTTGQVHVAGEVTTSAYADIPRIVREKVLEIGYDSSAKGFDGNSCGVNIAIGAQSPDIAQGVDTSHEARVGGTDDEIAKQGAGDQGLMFGYATTDTPELMPLPIALAHRLSRKLTEVRKTGVLPYLRPDGKTQVTIEYDGDRPVRLDTVVISTQHAADIDLDNLLAPDIREKVVDAVLADLDLPSPLDTSDIRLLVNPTGKFVLGGPMGDAGLTGRKIIVDTYGGMARHGGGAFSGKDPSKVDRSAAYAMRWVAKNVVAAGLSERVEVQVAYAIGKAAPVGLFVETFGTEKVDPARIAAAITEVFDLRPGAIIRDLDLLRPIYAPTAAYGHFGRTDIDLPWEHTDRADKLRAAAGL.

Histidine 18 is a binding site for ATP. Position 20 (aspartate 20) interacts with Mg(2+). Residue glutamate 46 coordinates K(+). L-methionine is bound by residues glutamate 59 and glutamine 102. Positions glutamine 102–threonine 112 are flexible loop. ATP is bound by residues aspartate 177–lysine 179, lysine 249–phenylalanine 250, aspartate 258, arginine 264–lysine 265, alanine 281, and lysine 285. Aspartate 258 serves as a coordination point for L-methionine. An L-methionine-binding site is contributed by lysine 289.

The protein belongs to the AdoMet synthase family. Homotetramer; dimer of dimers. It depends on Mg(2+) as a cofactor. K(+) serves as cofactor.

It localises to the cytoplasm. The enzyme catalyses L-methionine + ATP + H2O = S-adenosyl-L-methionine + phosphate + diphosphate. Its pathway is amino-acid biosynthesis; S-adenosyl-L-methionine biosynthesis; S-adenosyl-L-methionine from L-methionine: step 1/1. In terms of biological role, catalyzes the formation of S-adenosylmethionine (AdoMet) from methionine and ATP. The overall synthetic reaction is composed of two sequential steps, AdoMet formation and the subsequent tripolyphosphate hydrolysis which occurs prior to release of AdoMet from the enzyme. This Nocardia farcinica (strain IFM 10152) protein is S-adenosylmethionine synthase.